The chain runs to 806 residues: Facilitated trehalose transporter Tret1 (806 aa).

Disordered regions lie at residues 1–34 (MFGNEMDDTRDPLQYGYQRVNTGEGSLSTSTTGT) and 48–138 (LNST…HKNQ). The Cytoplasmic segment spans residues 1–339 (MFGNEMDDTR…LEVYRPTTNP (339 aa)). Over residues 25 to 34 (GSLSTSTTGT) the composition is skewed to low complexity. A helical membrane pass occupies residues 340 to 360 (IFIWTQVLAALSVSLGSMVVG). Residues 361–389 (FSSAYTSPALVSMKDRNITSFEVTDQSGS) lie on the Extracellular side of the membrane. A glycan (N-linked (GlcNAc...) asparagine) is linked at Asn377. The chain crosses the membrane as a helical span at residues 390–410 (WVGGIMPLAGLAGGILGGPLI). Residues 411-424 (EYLGRKNTILATAT) lie on the Cytoplasmic side of the membrane. Residues 425–445 (PFIISWLLIACATHVAMVLVG) traverse the membrane as a helical segment. Residues 446 to 447 (RA) lie on the Extracellular side of the membrane. The chain crosses the membrane as a helical span at residues 448 to 468 (LSGFSVGVASLSLPVYLGETV). Over 469-473 (QPEVR) the chain is Cytoplasmic. Residues 474–494 (GTLGLLPTAFGNIGILLCFVA) form a helical membrane-spanning segment. Topologically, residues 495–501 (GKYMDWS) are extracellular. Residues 502–522 (GLAFLGAALPIPFLLLMFLIP) traverse the membrane as a helical segment. The Cytoplasmic segment spans residues 523–585 (ETPRWYVSRG…DLMKKANLKP (63 aa)). A helical transmembrane segment spans residues 586 to 606 (LLISLGLMFFQQLSGINAVIF). Residues 607–622 (YTVQIFQDAGSTIDEN) lie on the Extracellular side of the membrane. A helical membrane pass occupies residues 623-643 (LCTIIVGVVNFIATFIATMLI). Topologically, residues 644-649 (DRLGRK) are cytoplasmic. A helical membrane pass occupies residues 650 to 670 (MLLYISDVAMIITLMTLGGFF). Residues 671–681 (YVKNSGQDVSQ) are Extracellular-facing. A helical transmembrane segment spans residues 682–702 (VGWLPLAAFVIYVLGFSLGFG). The Cytoplasmic segment spans residues 703–723 (PIPWLMMGEILPGKIRGSAAS). The chain crosses the membrane as a helical span at residues 724–744 (VATAFNWSCTFIVTKTFADII). Over 745-750 (NAIGTH) the chain is Extracellular. Residues 751-771 (GTFWMFGSICVIGLAFVIFYV) traverse the membrane as a helical segment. Residues 772–806 (PETQGKSLEDIERKMMGRVRRMSSVANIKPLSFNM) lie on the Cytoplasmic side of the membrane.

This sequence belongs to the major facilitator superfamily. Sugar transporter (TC 2.A.1.1) family. Trehalose transporter subfamily.

It is found in the cell membrane. Functionally, high-capacity facilitative transporter for trehalose. Does not transport maltose, sucrose or lactose. Mediates the bidirectional transfer of trehalose. Responsible for the transport of trehalose synthesized in the fat body and the incorporation of trehalose into other tissues that require a carbon source, thereby regulating trehalose levels in the hemolymph. The protein is Facilitated trehalose transporter Tret1 of Aedes aegypti (Yellowfever mosquito).